Reading from the N-terminus, the 314-residue chain is Ferrochelatase (314 aa).

Residues H184 and E259 each coordinate Fe cation.

The protein belongs to the ferrochelatase family.

Its subcellular location is the cytoplasm. It catalyses the reaction heme b + 2 H(+) = protoporphyrin IX + Fe(2+). The protein operates within porphyrin-containing compound metabolism; protoheme biosynthesis; protoheme from protoporphyrin-IX: step 1/1. In terms of biological role, catalyzes the ferrous insertion into protoporphyrin IX. The polypeptide is Ferrochelatase (Chlamydia trachomatis serovar D (strain ATCC VR-885 / DSM 19411 / UW-3/Cx)).